Here is an 80-residue protein sequence, read N- to C-terminus: MSQDATLEKVRSIVSEQLSVDAGEVKLESNFQNDLGADSLDTVELVMALEEAFDIEIPDEAAEGIATVGDAVKYIEDKQG.

One can recognise a Carrier domain in the interval 4–79 (DATLEKVRSI…DAVKYIEDKQ (76 aa)). S39 carries the O-(pantetheine 4'-phosphoryl)serine modification.

It belongs to the acyl carrier protein (ACP) family. 4'-phosphopantetheine is transferred from CoA to a specific serine of apo-ACP by AcpS. This modification is essential for activity because fatty acids are bound in thioester linkage to the sulfhydryl of the prosthetic group.

The protein resides in the cytoplasm. It participates in lipid metabolism; fatty acid biosynthesis. Carrier of the growing fatty acid chain in fatty acid biosynthesis. This Prochlorococcus marinus (strain MIT 9211) protein is Acyl carrier protein.